A 182-amino-acid chain; its full sequence is MSFKGTTVIAIKKNGKTVVAADGQVTFGHTVLKSNAIKIRKLLNGKILAGFAGSTSDAITLFEKFEEKIKAKGDGLIDIKRAAVDLAKDWRSDKILHKLEAMMLVADSNNILLISGTGDVVEPEEDVISIGSGGNYAYSAALAYMENKKLSAFEVALRSLKIAARVCIYTNSNIVLEEIENE.

Residue threonine 6 is part of the active site. Na(+) contacts are provided by alanine 164, cysteine 167, and threonine 170.

It belongs to the peptidase T1B family. HslV subfamily. In terms of assembly, a double ring-shaped homohexamer of HslV is capped on each side by a ring-shaped HslU homohexamer. The assembly of the HslU/HslV complex is dependent on binding of ATP.

The protein localises to the cytoplasm. It carries out the reaction ATP-dependent cleavage of peptide bonds with broad specificity.. Allosterically activated by HslU binding. Protease subunit of a proteasome-like degradation complex believed to be a general protein degrading machinery. The protein is ATP-dependent protease subunit HslV of Borreliella burgdorferi (strain ATCC 35210 / DSM 4680 / CIP 102532 / B31) (Borrelia burgdorferi).